The chain runs to 81 residues: Small cysteine-rich protein 1 1 (81 aa).

Positions 1–19 are cleaved as a signal peptide; it reads MGVHFNICLLLLLVATISS. Positions 20–39 are excised as a propeptide; sequence QTLKATEKDDSTDENPFGIY.

This sequence belongs to the Cnidaria small cysteine-rich protein (SCRiP) family. alpha subfamily. The basic myotoxic domain of rattlesnake crotamine toxins (with 6 Cys residues) has been detected in this protein. However, this protein contains 2 additional Cys at the C-terminal region. Hence, this protein may contain 4 disulfide bonds instead of the 3 suggested by the myotoxin domain.

The protein resides in the secreted. It localises to the nematocyst. In terms of biological role, induces neurotoxic symptoms on zebrafish. Has also been claimed to be implied in calcification, but tests on homolog proteins suggest that proteins of this family have a neurotoxic function and not a calcification function. This Montipora capitata (Rice coral) protein is Small cysteine-rich protein 1 1.